Here is a 329-residue protein sequence, read N- to C-terminus: Probable tyrosine--tRNA ligase, cytoplasmic (329 aa).

Tyrosine 35 lines the L-tyrosine pocket. The 'HIGH' region motif lies at threonine 40–tyrosine 48. 4 residues coordinate L-tyrosine: tyrosine 162, glutamine 166, aspartate 169, and glutamine 184. Positions lysine 218–serine 222 match the 'KMSKS' region motif.

It belongs to the class-I aminoacyl-tRNA synthetase family. Homodimer.

The protein localises to the cytoplasm. It carries out the reaction tRNA(Tyr) + L-tyrosine + ATP = L-tyrosyl-tRNA(Tyr) + AMP + diphosphate + H(+). In Vairimorpha ceranae (strain BRL01) (Microsporidian parasite), this protein is Probable tyrosine--tRNA ligase, cytoplasmic.